A 276-amino-acid polypeptide reads, in one-letter code: Diaminopimelate epimerase (276 aa).

3 residues coordinate substrate: N13, Q46, and N66. C75 acts as the Proton donor in catalysis. Substrate contacts are provided by residues G76–N77, N159, N192, and E210–R211. The active-site Proton acceptor is C219. Substrate is bound at residue G220 to T221.

It belongs to the diaminopimelate epimerase family. As to quaternary structure, homodimer.

It is found in the cytoplasm. It carries out the reaction (2S,6S)-2,6-diaminopimelate = meso-2,6-diaminopimelate. Its pathway is amino-acid biosynthesis; L-lysine biosynthesis via DAP pathway; DL-2,6-diaminopimelate from LL-2,6-diaminopimelate: step 1/1. Catalyzes the stereoinversion of LL-2,6-diaminopimelate (L,L-DAP) to meso-diaminopimelate (meso-DAP), a precursor of L-lysine and an essential component of the bacterial peptidoglycan. This chain is Diaminopimelate epimerase, found in Chromobacterium violaceum (strain ATCC 12472 / DSM 30191 / JCM 1249 / CCUG 213 / NBRC 12614 / NCIMB 9131 / NCTC 9757 / MK).